The sequence spans 336 residues: Dihydroorotate dehydrogenase (quinone) (336 aa).

Residues 62–66 and threonine 86 each bind FMN; that span reads AGLDK. A substrate-binding site is contributed by lysine 66. 111–115 provides a ligand contact to substrate; sequence NRMGF. Residues asparagine 139 and asparagine 172 each contribute to the FMN site. Asparagine 172 is a binding site for substrate. The active-site Nucleophile is the serine 175. Substrate is bound at residue asparagine 177. Lysine 217 and threonine 245 together coordinate FMN. 246 to 247 contacts substrate; it reads NT. FMN is bound by residues glycine 268, glycine 297, and 318–319; that span reads YS.

The protein belongs to the dihydroorotate dehydrogenase family. Type 2 subfamily. In terms of assembly, monomer. Requires FMN as cofactor.

It localises to the cell membrane. The enzyme catalyses (S)-dihydroorotate + a quinone = orotate + a quinol. It participates in pyrimidine metabolism; UMP biosynthesis via de novo pathway; orotate from (S)-dihydroorotate (quinone route): step 1/1. Catalyzes the conversion of dihydroorotate to orotate with quinone as electron acceptor. The chain is Dihydroorotate dehydrogenase (quinone) from Pectobacterium carotovorum subsp. carotovorum (strain PC1).